We begin with the raw amino-acid sequence, 61 residues long: Small ribosomal subunit protein uS14B (61 aa).

Zn(2+) is bound by residues Cys24, Cys27, Cys40, and Cys43.

This sequence belongs to the universal ribosomal protein uS14 family. Zinc-binding uS14 subfamily. In terms of assembly, part of the 30S ribosomal subunit. Contacts proteins S3 and S10. The cofactor is Zn(2+).

Its function is as follows. Binds 16S rRNA, required for the assembly of 30S particles and may also be responsible for determining the conformation of the 16S rRNA at the A site. This is Small ribosomal subunit protein uS14B from Oceanobacillus iheyensis (strain DSM 14371 / CIP 107618 / JCM 11309 / KCTC 3954 / HTE831).